Reading from the N-terminus, the 175-residue chain is 6,7-dimethyl-8-ribityllumazine synthase (175 aa).

5-amino-6-(D-ribitylamino)uracil is bound by residues Phe-24, Ala-58–Glu-60, and Ala-82–Ile-84. A (2S)-2-hydroxy-3-oxobutyl phosphate-binding site is contributed by Glu-87 to Thr-88. The active-site Proton donor is the His-90. Residue Asn-115 coordinates 5-amino-6-(D-ribitylamino)uracil. Arg-129 lines the (2S)-2-hydroxy-3-oxobutyl phosphate pocket. Residues Ala-150–Arg-175 form a disordered region. A compositionally biased stretch (acidic residues) spans Glu-152–Arg-175.

It belongs to the DMRL synthase family.

The catalysed reaction is (2S)-2-hydroxy-3-oxobutyl phosphate + 5-amino-6-(D-ribitylamino)uracil = 6,7-dimethyl-8-(1-D-ribityl)lumazine + phosphate + 2 H2O + H(+). Its pathway is cofactor biosynthesis; riboflavin biosynthesis; riboflavin from 2-hydroxy-3-oxobutyl phosphate and 5-amino-6-(D-ribitylamino)uracil: step 1/2. Catalyzes the formation of 6,7-dimethyl-8-ribityllumazine by condensation of 5-amino-6-(D-ribitylamino)uracil with 3,4-dihydroxy-2-butanone 4-phosphate. This is the penultimate step in the biosynthesis of riboflavin. The polypeptide is 6,7-dimethyl-8-ribityllumazine synthase (Bordetella bronchiseptica (strain ATCC BAA-588 / NCTC 13252 / RB50) (Alcaligenes bronchisepticus)).